A 245-amino-acid chain; its full sequence is 1-(5-phosphoribosyl)-5-[(5-phosphoribosylamino)methylideneamino] imidazole-4-carboxamide isomerase (245 aa).

The Proton acceptor role is filled by Asp7. The Proton donor role is filled by Asp129.

Belongs to the HisA/HisF family.

The protein localises to the cytoplasm. It carries out the reaction 1-(5-phospho-beta-D-ribosyl)-5-[(5-phospho-beta-D-ribosylamino)methylideneamino]imidazole-4-carboxamide = 5-[(5-phospho-1-deoxy-D-ribulos-1-ylimino)methylamino]-1-(5-phospho-beta-D-ribosyl)imidazole-4-carboxamide. It functions in the pathway amino-acid biosynthesis; L-histidine biosynthesis; L-histidine from 5-phospho-alpha-D-ribose 1-diphosphate: step 4/9. The chain is 1-(5-phosphoribosyl)-5-[(5-phosphoribosylamino)methylideneamino] imidazole-4-carboxamide isomerase from Vibrio campbellii (strain ATCC BAA-1116).